We begin with the raw amino-acid sequence, 544 residues long: Chaperonin GroEL (544 aa).

Residues T29 to P32, D86 to T90, G413, N476 to L478, and D492 each bind ATP.

Belongs to the chaperonin (HSP60) family. Forms a cylinder of 14 subunits composed of two heptameric rings stacked back-to-back. Interacts with the co-chaperonin GroES.

It is found in the cytoplasm. The enzyme catalyses ATP + H2O + a folded polypeptide = ADP + phosphate + an unfolded polypeptide.. In terms of biological role, together with its co-chaperonin GroES, plays an essential role in assisting protein folding. The GroEL-GroES system forms a nano-cage that allows encapsulation of the non-native substrate proteins and provides a physical environment optimized to promote and accelerate protein folding. The polypeptide is Chaperonin GroEL (Desulfitobacterium hafniense (strain DSM 10664 / DCB-2)).